The sequence spans 270 residues: LIM zinc-binding domain-containing Nebulette (270 aa).

Residues 3–63 (PQCARCGKVV…NAHYPKQSFT (61 aa)) enclose the LIM zinc-binding domain. The Nebulin 1 repeat unit spans residues 61 to 95 (SFTTVADTPENLRLKQQSELQSQVKYKRDFEESKG). Arg96 carries the omega-N-methylarginine modification. The Nebulin 2 repeat unit spans residues 97–131 (GFSIVTDTPELQRLKRTQEQISNVKYHEDFEKTKG). Omega-N-methylarginine is present on Arg132. The stretch at 133–159 (GFTPVVDDPVTERVRKSTQVVSDAAYK) is one Nebulin 3 repeat. At Thr135 the chain carries Phosphothreonine. The SH3 domain maps to 210–270 (AHLRTYRAMY…LPANYIEFVN (61 aa)). Ser230 carries the post-translational modification Phosphoserine.

It is found in the cytoplasm. Binds to actin and plays an important role in the assembly of the Z-disk. Isoform 2 might play a role in the assembly of focal adhesion. In Mus musculus (Mouse), this protein is LIM zinc-binding domain-containing Nebulette (Nebl).